Here is a 630-residue protein sequence, read N- to C-terminus: Exonuclease V, mitochondrial (630 aa).

Residues 1–24 (MIRPGKVLVLNFLKRSLSNLATFK) constitute a mitochondrion transit peptide. 4 residues coordinate [4Fe-4S] cluster: Cys150, Cys597, Cys600, and Cys606.

The protein belongs to the EXO5 family. In terms of assembly, monomer. Mg(2+) serves as cofactor. [4Fe-4S] cluster is required as a cofactor.

The protein resides in the mitochondrion. Functionally, single strand DNA specific 5' exonuclease involved in mitochondrial DNA replication and recombination. Releases dinucleotides as main products of catalysis. Has the capacity to slide across 5'double-stranded DNA or 5'RNA sequences and resumes cutting two nucleotides downstream of the double-stranded-to-single-stranded junction or RNA-to-DNA junction, respectively. This is Exonuclease V, mitochondrial (EXO5) from Debaryomyces hansenii (strain ATCC 36239 / CBS 767 / BCRC 21394 / JCM 1990 / NBRC 0083 / IGC 2968) (Yeast).